The following is a 175-amino-acid chain: Adenine phosphoribosyltransferase (175 aa).

This sequence belongs to the purine/pyrimidine phosphoribosyltransferase family. Homodimer.

It localises to the cytoplasm. The catalysed reaction is AMP + diphosphate = 5-phospho-alpha-D-ribose 1-diphosphate + adenine. It participates in purine metabolism; AMP biosynthesis via salvage pathway; AMP from adenine: step 1/1. Functionally, catalyzes a salvage reaction resulting in the formation of AMP, that is energically less costly than de novo synthesis. The protein is Adenine phosphoribosyltransferase of Francisella tularensis subsp. tularensis (strain WY96-3418).